Consider the following 527-residue polypeptide: Phospholipase A1-Igamma3, chloroplastic (527 aa).

The transit peptide at 1-52 (MASLSLPITLKNPRFFSSSPQNIFKTQPQTLVLTTKFKTCSIICSSSCTSIS) directs the protein to the chloroplast. A compositionally biased stretch (low complexity) spans 55-65 (TTQQKQSNKQT). A disordered region spans residues 55 to 82 (TTQQKQSNKQTHVSDNKREEKAEEEEEE). Residues 66 to 75 (HVSDNKREEK) are compositionally biased toward basic and acidic residues. Residues 300 to 304 (GHSLG) carry the GXSXG motif. The active-site Acyl-ester intermediate is the Ser302. Residues Asp366 and His423 each act as charge relay system in the active site.

This sequence belongs to the AB hydrolase superfamily. Lipase family. Highly expressed in flowers. Lower levels in seedlings, leaves and stems.

The protein resides in the plastid. The protein localises to the chloroplast. It catalyses the reaction 1,2-dihexadecanoyl-sn-glycero-3-phosphocholine + H2O = 2-hexadecanoyl-sn-glycero-3-phosphocholine + hexadecanoate + H(+). It carries out the reaction a 1,2-diacyl-3-O-(beta-D-galactosyl)-sn-glycerol + H2O = an acyl-3-O-(beta-D-galactosyl)-sn-glycerol + a fatty acid + H(+). The catalysed reaction is a 1,2-diacyl-3-O-[alpha-D-galactosyl-(1-&gt;6)-beta-D-galactosyl]-sn-glycerol + H2O = acyl-3-O-[alpha-D-galactosyl-(1-&gt;6)-beta-D-galactosyl]-sn-glycerol + a fatty acid + H(+). Its function is as follows. Acylhydrolase that catalyzes the hydrolysis of phosphatidylcholine at the sn-1 position. Moderate activity toward phosphatidylcholine (PC), monogalactosyldiacylglycerol (MGDG), digalactosyldiacylglycerol (DGDG) and triacylglycerol (TAG). The sequence is that of Phospholipase A1-Igamma3, chloroplastic from Arabidopsis thaliana (Mouse-ear cress).